Consider the following 182-residue polypeptide: UPF0397 protein SPG_0438 (182 aa).

The next 5 membrane-spanning stretches (helical) occupy residues 10–30 (VVAV…NIPT), 46–66 (LLSI…GHAI), 73–93 (YGLW…VGLF), 109–129 (ILIF…VLAP), and 148–168 (IVAG…LLLA).

The protein belongs to the UPF0397 family.

The protein localises to the cell membrane. The polypeptide is UPF0397 protein SPG_0438 (Streptococcus pneumoniae serotype 19F (strain G54)).